Reading from the N-terminus, the 180-residue chain is Stathmin-3 (180 aa).

2 S-palmitoyl cysteine lipidation sites follow: Cys22 and Cys24. One can recognise an SLD domain in the interval 38–180 (GDMEVKQLDK…NKEQREEMSG (143 aa)). A phosphoserine mark is found at Ser50, Ser60, Ser65, Ser68, Ser72, Ser73, and Ser81. The interval 59-82 (KSPSDLSPESPMLSSPPKKKDTSL) is disordered. The span at 60-74 (SPSDLSPESPMLSSP) shows a compositional bias: low complexity. Residues 76–179 (KKKDTSLEEL…RNKEQREEMS (104 aa)) are a coiled coil.

This sequence belongs to the stathmin family. As to quaternary structure, interacts with STAT3. Interacts with CLU (secreted form); this interaction may act as an important modulator during neuronal differentiation. Post-translationally, N-terminal palmitoylation promotes specific anchoring to the cytosolic leaflet of Golgi membranes and subsequent vesicular trafficking along dendrites and axons. Neuronal Stathmins are substrates for palmitoyltransferases ZDHHC3, ZDHHC7 and ZDHHC15.

The protein localises to the golgi apparatus. The protein resides in the cell projection. Its subcellular location is the growth cone. It is found in the axon. It localises to the cytoplasm. The protein localises to the cytosol. In terms of biological role, exhibits microtubule-destabilizing activity, which is antagonized by STAT3. The polypeptide is Stathmin-3 (STMN3) (Macaca fascicularis (Crab-eating macaque)).